Reading from the N-terminus, the 294-residue chain is Thymidylate synthase (294 aa).

DUMP is bound by residues arginine 30 and 156-157; that span reads RR. Residue cysteine 176 is the Nucleophile of the active site. DUMP-binding positions include 196–199, asparagine 207, and 237–239; these read RSGD and HVY. Position 199 (aspartate 199) interacts with (6R)-5,10-methylene-5,6,7,8-tetrahydrofolate. A (6R)-5,10-methylene-5,6,7,8-tetrahydrofolate-binding site is contributed by alanine 293.

It belongs to the thymidylate synthase family. As to quaternary structure, homodimer.

The catalysed reaction is dUMP + (6R)-5,10-methylene-5,6,7,8-tetrahydrofolate = 7,8-dihydrofolate + dTMP. It functions in the pathway pyrimidine metabolism; dTTP biosynthesis. The chain is Thymidylate synthase from Ascaris suum (Pig roundworm).